The chain runs to 440 residues: 3-phosphoshikimate 1-carboxyvinyltransferase (440 aa).

3-phosphoshikimate-binding residues include lysine 25, serine 26, and arginine 30. Lysine 25 lines the phosphoenolpyruvate pocket. The phosphoenolpyruvate site is built by glycine 96 and arginine 124. 3-phosphoshikimate contacts are provided by serine 168, glutamine 169, aspartate 310, and lysine 337. Residue glutamine 169 coordinates phosphoenolpyruvate. Aspartate 310 acts as the Proton acceptor in catalysis. Phosphoenolpyruvate is bound by residues arginine 341, arginine 382, and lysine 409.

The protein belongs to the EPSP synthase family. Monomer.

Its subcellular location is the cytoplasm. The enzyme catalyses 3-phosphoshikimate + phosphoenolpyruvate = 5-O-(1-carboxyvinyl)-3-phosphoshikimate + phosphate. It functions in the pathway metabolic intermediate biosynthesis; chorismate biosynthesis; chorismate from D-erythrose 4-phosphate and phosphoenolpyruvate: step 6/7. Its function is as follows. Catalyzes the transfer of the enolpyruvyl moiety of phosphoenolpyruvate (PEP) to the 5-hydroxyl of shikimate-3-phosphate (S3P) to produce enolpyruvyl shikimate-3-phosphate and inorganic phosphate. The chain is 3-phosphoshikimate 1-carboxyvinyltransferase from Chlamydia trachomatis serovar D (strain ATCC VR-885 / DSM 19411 / UW-3/Cx).